Here is a 284-residue protein sequence, read N- to C-terminus: 2-dehydro-3-deoxyphosphooctonate aldolase (284 aa).

It belongs to the KdsA family.

The protein resides in the cytoplasm. It catalyses the reaction D-arabinose 5-phosphate + phosphoenolpyruvate + H2O = 3-deoxy-alpha-D-manno-2-octulosonate-8-phosphate + phosphate. It participates in carbohydrate biosynthesis; 3-deoxy-D-manno-octulosonate biosynthesis; 3-deoxy-D-manno-octulosonate from D-ribulose 5-phosphate: step 2/3. It functions in the pathway bacterial outer membrane biogenesis; lipopolysaccharide biosynthesis. In Actinobacillus pleuropneumoniae serotype 7 (strain AP76), this protein is 2-dehydro-3-deoxyphosphooctonate aldolase.